A 571-amino-acid polypeptide reads, in one-letter code: Urease subunit alpha (571 aa).

The 441-residue stretch at 131 to 571 folds into the Urease domain; that stretch reads GGIDAHIHFI…LPMAQRYFLF (441 aa). Ni(2+)-binding residues include H136, H138, and K219. K219 carries the N6-carboxylysine modification. Position 221 (H221) interacts with substrate. Ni(2+) is bound by residues H248 and H274. Residue H322 is the Proton donor of the active site. D362 contacts Ni(2+).

The protein belongs to the metallo-dependent hydrolases superfamily. Urease alpha subunit family. As to quaternary structure, heterotrimer of UreA (gamma), UreB (beta) and UreC (alpha) subunits. Three heterotrimers associate to form the active enzyme. It depends on Ni cation as a cofactor. In terms of processing, carboxylation allows a single lysine to coordinate two nickel ions.

Its subcellular location is the cytoplasm. The enzyme catalyses urea + 2 H2O + H(+) = hydrogencarbonate + 2 NH4(+). It functions in the pathway nitrogen metabolism; urea degradation; CO(2) and NH(3) from urea (urease route): step 1/1. In Nostoc punctiforme (strain ATCC 29133 / PCC 73102), this protein is Urease subunit alpha.